Reading from the N-terminus, the 264-residue chain is Tritrans,polycis-undecaprenyl-diphosphate synthase (geranylgeranyl-diphosphate specific) (264 aa).

Residue Asp43 is part of the active site. Asp43 contacts Mg(2+). Substrate-binding positions include 44 to 47, Trp48, His60, and 88 to 90; these read GNRR and STE. The Proton acceptor role is filled by Asn91. Substrate-binding positions include Phe92, Arg94, Arg213, and 219 to 221; that span reads RIS. Glu232 provides a ligand contact to Mg(2+).

It belongs to the UPP synthase family. Homodimer. The cofactor is Mg(2+).

It carries out the reaction geranylgeranyl diphosphate + 7 isopentenyl diphosphate = tri-trans,hepta-cis-undecaprenyl diphosphate + 7 diphosphate. Its function is as follows. Catalyzes the sequential condensation of isopentenyl diphosphate (IPP) with geranylgeranyl diphosphate (GGPP) to yield (2Z,6Z,10Z,14Z,18Z,22Z,26Z,30E,34E,38E)-undecaprenyl diphosphate (tritrans,heptacis-UPP). It is probably the precursor of glycosyl carrier lipids. The protein is Tritrans,polycis-undecaprenyl-diphosphate synthase (geranylgeranyl-diphosphate specific) of Pyrococcus furiosus (strain ATCC 43587 / DSM 3638 / JCM 8422 / Vc1).